A 225-amino-acid chain; its full sequence is Probable CDP-diacylglycerol--inositol 3-phosphatidyltransferase 2 (225 aa).

2 helical membrane passes run 6–26 (PATL…RVLL) and 29–49 (IAFS…FFSF). Mg(2+) contacts are provided by aspartate 52 and aspartate 55. Residues glycine 56, arginine 60, and serine 66 each coordinate a CDP-1,2-diacyl-sn-glycerol. Aspartate 73 and aspartate 77 together coordinate Mg(2+). Aspartate 77 serves as the catalytic Proton acceptor. A run of 3 helical transmembrane segments spans residues 84–104 (LLVI…LLAL), 143–163 (MFMG…LLIA), and 184–204 (LSLL…INVI).

This sequence belongs to the CDP-alcohol phosphatidyltransferase class-I family. Mg(2+) is required as a cofactor. Requires Mn(2+) as cofactor.

The protein resides in the membrane. It carries out the reaction a CDP-1,2-diacyl-sn-glycerol + myo-inositol = a 1,2-diacyl-sn-glycero-3-phospho-(1D-myo-inositol) + CMP + H(+). In terms of biological role, catalyzes the biosynthesis of phosphatidylinositol (PtdIns) as well as PtdIns:inositol exchange reaction. May thus act to reduce an excessive cellular PtdIns content. The exchange activity is due to the reverse reaction of PtdIns synthase and is dependent on CMP, which is tightly bound to the enzyme. In Arabidopsis thaliana (Mouse-ear cress), this protein is Probable CDP-diacylglycerol--inositol 3-phosphatidyltransferase 2 (PIS2).